We begin with the raw amino-acid sequence, 132 residues long: D-ribose pyranase (132 aa).

His-20 serves as the catalytic Proton donor. Substrate-binding positions include Asp-28, His-99, and 121–123 (YSN).

The protein belongs to the RbsD / FucU family. RbsD subfamily. Homodecamer.

The protein resides in the cytoplasm. It catalyses the reaction beta-D-ribopyranose = beta-D-ribofuranose. The protein operates within carbohydrate metabolism; D-ribose degradation; D-ribose 5-phosphate from beta-D-ribopyranose: step 1/2. Catalyzes the interconversion of beta-pyran and beta-furan forms of D-ribose. This is D-ribose pyranase from Streptococcus agalactiae serotype III (strain NEM316).